The following is a 172-amino-acid chain: Cytidylate kinase (172 aa).

7–15 (GLAGTGTTT) lines the ATP pocket.

This sequence belongs to the cytidylate kinase family. Type 2 subfamily.

The protein resides in the cytoplasm. It catalyses the reaction CMP + ATP = CDP + ADP. The enzyme catalyses dCMP + ATP = dCDP + ADP. This Methanobrevibacter smithii (strain ATCC 35061 / DSM 861 / OCM 144 / PS) protein is Cytidylate kinase.